The primary structure comprises 145 residues: Transcription antitermination protein NusB (145 aa).

Belongs to the NusB family.

Its function is as follows. Involved in transcription antitermination. Required for transcription of ribosomal RNA (rRNA) genes. Binds specifically to the boxA antiterminator sequence of the ribosomal RNA (rrn) operons. This is Transcription antitermination protein NusB from Burkholderia lata (strain ATCC 17760 / DSM 23089 / LMG 22485 / NCIMB 9086 / R18194 / 383).